A 1591-amino-acid polypeptide reads, in one-letter code: MRTTKVYKLVIHKKGFGGSDDELVVNPKVFPHIKLGDIVEIAHPNDEYSPLLLQVKSLKEDLQKETISVDQTVTQVFRLRPYQDVYVNVVDPKDVTLDLVELTFKDQYIGRGDMWRLKKSLVSTCAYITQKVEFAGIRAQAGELWVKNEKVMCGYISEETRVVFRSTSAMVYIFIQMSCEMWDFDIYGDLYFEKAVNGFLADLFTKWKEKNCSHEVTVVLFSRTFYDAKSIDEFPEINRASIQEDHKGRFYEDFYKVVVQNERREEWTSLLVTIKKLFIQYPVLVRLEQAGGFPQGDNSTSAQGNYLEAINLSFNVFDKHYINRNFDRTGQMSVVITPGVGVFEVDRLLMILTKQRMIDNGIGVDLVCMGEQPLHAVPLFKLHNRSVPRDSRLGDDYNIPHWINHSFYTSKSQLFCNSFTPRIKLAGKKSASEKTKNGRDTSLGTPKESENTLPIQVDYDAYDAQVFRLPGPSRAQRLATCRSVREQENHSRKSASSCDVSSSPSLPSRALPTEEVRSQASDDSSLGKSTNILMIPNPHLHQYEVSSSLGYTSTRDVLENMIEPPQRDSSAPGRFHVGSAESMLHVRPGGYTPQRALINPFAPSRMPMKLTSNRRRWMHTFPVGPSGEAIQIHHQTRQNMAELQGSRQRDPTHSSAELLELAYHEAAGRHSTSRQPGDSMSLNFSGTEELSVSLLSNSSTGVNPRTQNKDSLEDSVSTSPDPMPGFCCTVGVDWKSLTTPACLPLTTDYFPDRQGLQNDYTEGCYDLLPEADMDRRDEEGVQMTAQQVFEEFICQRLMQGYQIIVQPKTQKPNTTVPPPLSSSPLYSRGLVSRNRPEEEGQYWLSMGRTFHKVTLKDKMITVTRYLPKYPYESAQIHYTYSLCPSHSDSEFVSCWVDFCHERLEEYKWNYLDQYICSAGSEDFSLIESLKFWRTRFLLLPACVTATKRITEGEVHCDIYGDKPRADEDEWQLLDGFIRFVEGLNRIRRRHRSDRMIRKGTAMKGLQMTGPISAHSLEAAGPPVGKKGTSALSALLEMEASQKSLGEQQTTVHGKSSTQPAENSSVAMTPTYVDSPRKDGAFFMEFVRSPRTASSAFYPQASVDQTAPLVLDSTSLGVSTGQPMDRGNNQTFGNSQNIEQAFPSANSGDYSSQQHVASSLTSSSTLVEILEAMKHPSTGVQLLSEQKGLSPCCFISAEVVHWLMNNVEGVQTQAMGIDIMQKMLEEQLITHASGEAWRTFIYGFYFYKIVMDKEPERVAMQQPSAPWYTAGADDFASFQRKWFEVAFVAEELVHSEIPAFLLPWLPSRPASYASRHSSFSRSFGGRSQAAALLAATVPEQRTVTLDVDVNNRTDRLEWCSCYYHGNFSLNAAFEIKLHWMAVTATVLFEMVQGWHRKATSCGFLLVPVLEGPFALPSYLYGDPLRAQLFIPLNLSCLLKEGSEHLFDSFEPETYWDRMHLFQEAIAHRFGFVQDKYSVSAFNFPAENKPQYIHVTGTVFLQLPYSKRKFSGQQRRRRNSTSSTNQNMFCEERVGYNWAYNTMLTKTWRSSATGDEKFADRLLKDFTDFCINRDNRLVTFWTNCLEKMHASAP.

Disordered stretches follow at residues 427–455 (GKKSASEKTKNGRDTSLGTPKESENTLPI), 478–532 (LATC…STNI), and 695–720 (LSNSSTGVNPRTQNKDSLEDSVSTSP). The segment covering 430-439 (SASEKTKNGR) has biased composition (basic and acidic residues). Over residues 494-508 (SASSCDVSSSPSLPS) the composition is skewed to low complexity. Position 505 is a phosphoserine (Ser505). The span at 518–532 (SQASDDSSLGKSTNI) shows a compositional bias: polar residues. Ser992 is subject to Phosphoserine. Disordered regions lie at residues 1040–1064 (SQKSLGEQQTTVHGKSSTQPAENSS) and 1118–1153 (STGQPMDRGNNQTFGNSQNIEQAFPSANSGDYSSQQ). Residues 1118 to 1149 (STGQPMDRGNNQTFGNSQNIEQAFPSANSGDY) are compositionally biased toward polar residues. A DEP domain is found at 1175 to 1250 (PSTGVQLLSE…YGFYFYKIVM (76 aa)). Residue Ser1518 is modified to Phosphoserine.

The protein belongs to the IML1 family. As to quaternary structure, within the GATOR complex, component of the GATOR1 subcomplex, made of DEPDC5, NPRL2 and NPRL3. GATOR1 mediates the strong interaction of the GATOR complex with small GTPases Rag (RagA/RRAGA, RagB/RRAGB, RagC/RRAGC and/or RagD/RRAGD) heterodimers. GATOR1 interacts with GPR155/LYCHOS; interaction takes place in presence of cholesterol and prevents interaction between GATOR1 and KICSTOR. Interacts with SAMTOR; interaction is direct and takes place in presence of methionine, leading to inhibit the activity of the GATOR1 complex. In terms of processing, phosphorylation at Ser-992 and Ser-1518 by AKT1 and PIM1 inhibit the activity of DEPDC5, releasing inhibition of the mTORC1 pathway. Post-translationally, ubiquitinated. Amino acid-induced 'Lys-48'-linked polyubiquitination of DEPDC5 by the BCR(KLHL22) ubiquitin ligase complex leads to DEPDC5 proteasomal degradation and inhibition of the GATOR1 complex. Ubiquitination may occur at multiple lysines. As to expression, expressed at low levels in all brain regions. Expressed throughout brain development, including in midgestation embryonic head (11.5 dpc), neonatal brain and whole adult brain. Present in neurons and absent in non-neuronal cells, including astrocytes (at protein level).

The protein localises to the lysosome membrane. It localises to the cytoplasm. It is found in the cytosol. The protein resides in the perinuclear region. Functionally, as a component of the GATOR1 complex functions as an inhibitor of the amino acid-sensing branch of the mTORC1 pathway. In response to amino acid depletion, the GATOR1 complex has GTPase activating protein (GAP) activity and strongly increases GTP hydrolysis by RagA/RRAGA (or RagB/RRAGB) within heterodimeric Rag complexes, thereby turning them into their inactive GDP-bound form, releasing mTORC1 from lysosomal surface and inhibiting mTORC1 signaling. In the presence of abundant amino acids, the GATOR1 complex is negatively regulated by GATOR2, the other GATOR subcomplex, in this amino acid-sensing branch of the TORC1 pathway. Within the GATOR1 complex, DEPDC5 mediates direct interaction with the nucleotide-binding pocket of small GTPases Rag (RagA/RRAGA, RagB/RRAGB, RagC/RRAGC and/or RagD/RRAGD) and coordinates their nucleotide loading states by promoting RagA/RRAGA or RagB/RRAGB into their GDP-binding state and RagC/RRAGC or RagD/RRAGD into their GTP-binding state. However, it does not execute the GAP activity, which is mediated by NPRL2. This is GATOR1 complex protein DEPDC5 from Mus musculus (Mouse).